The sequence spans 186 residues: MSKTDWNASGPSRPSPSAHWPSGKLWQHGQKYQTTQDRSRPPARRRRQALRVSANHASQQLDQLKAVHLASAVRDLERAMTTLKPWDSPQEISRHQALGYSVIMFMITAVKRLRESKMLTLSWFNQALMVTAPSQEETMNLKTAMWILANLIPRDMLSLTGDLLPSLWGSGLLMLKLQKEERSTSS.

Positions 1–12 (MSKTDWNASGPS) are enriched in polar residues. Residues 1-43 (MSKTDWNASGPSRPSPSAHWPSGKLWQHGQKYQTTQDRSRPPA) form a disordered region.

The protein belongs to the morbillivirus protein C family. In terms of assembly, interacts with the phosphoprotein (via C-terminus); this interaction allows C to associate with the ribonucleocapsid.

The protein localises to the host nucleus. It localises to the host cytoplasmic vesicle. Ribonucleocapsid-associated protein that interacts with the phosphoprotein (P), thereby increasing replication accuracy and processivity of the polymerase complex. The protein is Protein C (P/V/C) of Homo sapiens (Human).